The primary structure comprises 326 residues: Beta-ketoacyl-[acyl-carrier-protein] synthase III (326 aa).

Active-site residues include Cys-112 and His-251. Positions 252–256 are ACP-binding; it reads QANSR. Asn-281 is an active-site residue.

Belongs to the thiolase-like superfamily. FabH family. As to quaternary structure, homodimer.

It is found in the cytoplasm. The catalysed reaction is malonyl-[ACP] + acetyl-CoA + H(+) = 3-oxobutanoyl-[ACP] + CO2 + CoA. The protein operates within lipid metabolism; fatty acid biosynthesis. In terms of biological role, catalyzes the condensation reaction of fatty acid synthesis by the addition to an acyl acceptor of two carbons from malonyl-ACP. Catalyzes the first condensation reaction which initiates fatty acid synthesis and may therefore play a role in governing the total rate of fatty acid production. Possesses both acetoacetyl-ACP synthase and acetyl transacylase activities. Its substrate specificity determines the biosynthesis of branched-chain and/or straight-chain of fatty acids. The chain is Beta-ketoacyl-[acyl-carrier-protein] synthase III from Clostridium botulinum (strain ATCC 19397 / Type A).